Reading from the N-terminus, the 833-residue chain is Zinc phosphodiesterase ELAC protein 2 homolog (833 aa).

Residues 1–19 (MLGAIARKTVENRILVSRH) constitute a mitochondrion transit peptide. Positions 624-646 (LTPPGSPGGPPGKRPRLPSPHLP) are enriched in pro residues. The interval 624–652 (LTPPGSPGGPPGKRPRLPSPHLPPSRDVL) is disordered.

It belongs to the RNase Z family. Homodimer. Zn(2+) is required as a cofactor. As to expression, highly expressed in the germline.

Its subcellular location is the mitochondrion. It localises to the nucleus. It catalyses the reaction Endonucleolytic cleavage of RNA, removing extra 3' nucleotides from tRNA precursor, generating 3' termini of tRNAs. A 3'-hydroxy group is left at the tRNA terminus and a 5'-phosphoryl group is left at the trailer molecule.. Its function is as follows. Zinc phosphodiesterase, which displays some tRNA 3'-processing endonuclease activity. Probably involved in tRNA maturation, by removing a 3'-trailer from precursor tRNA. Involved in germline proliferation. May be required for both mitosis and meiosis in germ cells. In terms of biological role, does not regulate the mitochondrial unfolded protein response following mitochondrial stress. Functionally, plays a role in mitochondrial unfolded protein response. Upon mitochondrial stress is exported from the nucleus where its tRNA endonuclease activity is negatively regulated. In response to mitochondrial stress, might be involved in activating a transcriptional response in an ATFS-1- and DVE-1-dependent manner. May play a role in negatively regulating the mitochondrial membrane potential. The protein is Zinc phosphodiesterase ELAC protein 2 homolog of Caenorhabditis elegans.